The chain runs to 92 residues: Small ribosomal subunit protein uS19 (92 aa).

The protein belongs to the universal ribosomal protein uS19 family.

Its function is as follows. Protein S19 forms a complex with S13 that binds strongly to the 16S ribosomal RNA. The protein is Small ribosomal subunit protein uS19 of Bartonella quintana (strain Toulouse) (Rochalimaea quintana).